We begin with the raw amino-acid sequence, 284 residues long: Type II methyltransferase M1.DpnII (284 aa).

Residues tryptophan 17, lysine 21, glycine 46, aspartate 62, aspartate 177, phenylalanine 178, and aspartate 194 each coordinate S-adenosyl-L-methionine.

Belongs to the N(4)/N(6)-methyltransferase family. As to quaternary structure, monomer. Homodimer.

The enzyme catalyses a 2'-deoxyadenosine in DNA + S-adenosyl-L-methionine = an N(6)-methyl-2'-deoxyadenosine in DNA + S-adenosyl-L-homocysteine + H(+). Functionally, an alpha subtype methylase that recognizes the double-stranded sequence 5'-GATC-3', methylates A-2 on both strands, and protects the DNA from cleavage by the DpnII endonuclease. This chain is Type II methyltransferase M1.DpnII, found in Streptococcus pneumoniae.